A 345-amino-acid polypeptide reads, in one-letter code: tRNA N6-adenosine threonylcarbamoyltransferase (345 aa).

Residues His-111 and His-115 each contribute to the Fe cation site. Residues 134–138, Asp-167, Gly-180, and Asn-277 contribute to the substrate site; that span reads LVSGG. Position 305 (Asp-305) interacts with Fe cation.

Belongs to the KAE1 / TsaD family. It depends on Fe(2+) as a cofactor.

The protein resides in the cytoplasm. It catalyses the reaction L-threonylcarbamoyladenylate + adenosine(37) in tRNA = N(6)-L-threonylcarbamoyladenosine(37) in tRNA + AMP + H(+). Required for the formation of a threonylcarbamoyl group on adenosine at position 37 (t(6)A37) in tRNAs that read codons beginning with adenine. Is involved in the transfer of the threonylcarbamoyl moiety of threonylcarbamoyl-AMP (TC-AMP) to the N6 group of A37, together with TsaE and TsaB. TsaD likely plays a direct catalytic role in this reaction. This chain is tRNA N6-adenosine threonylcarbamoyltransferase, found in Laribacter hongkongensis (strain HLHK9).